A 218-amino-acid polypeptide reads, in one-letter code: Response regulator UvrY (218 aa).

One can recognise a Response regulatory domain in the interval 3 to 119 (NVLLVDDHEL…EVVSAIRSVY (117 aa)). Position 54 is a 4-aspartylphosphate (aspartate 54). The region spanning 143 to 208 (TESPFASLSE…ELTHLAIRHG (66 aa)) is the HTH luxR-type domain. A DNA-binding region (H-T-H motif) is located at residues 167 to 186 (VNEISEQLNLSPKTVNSYRY).

Post-translationally, phosphorylated and activated by BarA.

The protein resides in the cytoplasm. Its function is as follows. Member of the two-component regulatory system UvrY/BarA involved in the regulation of carbon metabolism via the CsrA/CsrB regulatory system. UvrY activates the transcription of the untranslated csrB RNA and of barA, in an autoregulatory loop. Mediates the effects of CsrA on csrB RNA by BarA-dependent and BarA-independent mechanisms. This chain is Response regulator UvrY (uvrY), found in Escherichia coli (strain K12).